We begin with the raw amino-acid sequence, 188 residues long: NAD(P)H-quinone oxidoreductase subunit J (188 aa).

The span at 1–12 (MSETPSKQTAAS) shows a compositional bias: polar residues. The disordered stretch occupies residues 1-23 (MSETPSKQTAASDETGAVVAPEP).

It belongs to the complex I 30 kDa subunit family. As to quaternary structure, NDH-1 can be composed of about 15 different subunits; different subcomplexes with different compositions have been identified which probably have different functions.

Its subcellular location is the cellular thylakoid membrane. The enzyme catalyses a plastoquinone + NADH + (n+1) H(+)(in) = a plastoquinol + NAD(+) + n H(+)(out). The catalysed reaction is a plastoquinone + NADPH + (n+1) H(+)(in) = a plastoquinol + NADP(+) + n H(+)(out). NDH-1 shuttles electrons from an unknown electron donor, via FMN and iron-sulfur (Fe-S) centers, to quinones in the respiratory and/or the photosynthetic chain. The immediate electron acceptor for the enzyme in this species is believed to be plastoquinone. Couples the redox reaction to proton translocation, and thus conserves the redox energy in a proton gradient. Cyanobacterial NDH-1 also plays a role in inorganic carbon-concentration. This chain is NAD(P)H-quinone oxidoreductase subunit J, found in Synechococcus sp. (strain CC9605).